The sequence spans 91 residues: uncharacterized protein (91 aa).

The signal sequence occupies residues 1–21 (MKQLLASPSLQLVTYPASATA).

Belongs to the BhsA/McbA family.

It is found in the periplasm. This is an uncharacterized protein from Escherichia coli O157:H7.